We begin with the raw amino-acid sequence, 408 residues long: Succinylornithine transaminase (408 aa).

Lysine 252 is modified (N6-(pyridoxal phosphate)lysine).

This sequence belongs to the class-III pyridoxal-phosphate-dependent aminotransferase family. AstC subfamily. It depends on pyridoxal 5'-phosphate as a cofactor.

It carries out the reaction N(2)-succinyl-L-ornithine + 2-oxoglutarate = N-succinyl-L-glutamate 5-semialdehyde + L-glutamate. Its pathway is amino-acid degradation; L-arginine degradation via AST pathway; L-glutamate and succinate from L-arginine: step 3/5. In terms of biological role, catalyzes the transamination of N(2)-succinylornithine and alpha-ketoglutarate into N(2)-succinylglutamate semialdehyde and glutamate. Can also act as an acetylornithine aminotransferase. The polypeptide is Succinylornithine transaminase (Salmonella typhimurium (strain LT2 / SGSC1412 / ATCC 700720)).